A 673-amino-acid chain; its full sequence is UvrABC system protein B (673 aa).

Residues 26–414 (EGLEDGLAHQ…GDEVVDQVVR (389 aa)) enclose the Helicase ATP-binding domain. Position 39 to 46 (39 to 46 (GVTGSGKT)) interacts with ATP. The Beta-hairpin motif lies at 92–115 (YYDYYQPEAYVPSSDTFIEKDASV). Residues 431-597 (QVDDLLSEIR…GLNKKVVDIL (167 aa)) enclose the Helicase C-terminal domain. A UVR domain is found at 633 to 668 (QQKIHELEEQMMQHAQNLEFEEAAQIRDQLHQLREL).

The protein belongs to the UvrB family. As to quaternary structure, forms a heterotetramer with UvrA during the search for lesions. Interacts with UvrC in an incision complex.

The protein localises to the cytoplasm. Functionally, the UvrABC repair system catalyzes the recognition and processing of DNA lesions. A damage recognition complex composed of 2 UvrA and 2 UvrB subunits scans DNA for abnormalities. Upon binding of the UvrA(2)B(2) complex to a putative damaged site, the DNA wraps around one UvrB monomer. DNA wrap is dependent on ATP binding by UvrB and probably causes local melting of the DNA helix, facilitating insertion of UvrB beta-hairpin between the DNA strands. Then UvrB probes one DNA strand for the presence of a lesion. If a lesion is found the UvrA subunits dissociate and the UvrB-DNA preincision complex is formed. This complex is subsequently bound by UvrC and the second UvrB is released. If no lesion is found, the DNA wraps around the other UvrB subunit that will check the other stand for damage. This is UvrABC system protein B from Salmonella typhi.